The primary structure comprises 3726 residues: Histone-lysine N-methyltransferase trithorax (3726 aa).

Disordered regions lie at residues 1 to 247 (MGRS…ATTS), 321 to 352 (QLNSPVVDNPSPSPPIASGSTPSVEGGIGVGG), 371 to 429 (NEVA…TAKQ), and 509 to 624 (AGAS…RSTR). Composition is skewed to low complexity over residues 31 to 53 (PAEPQQPAPESQQPSGSGSGSSA) and 71 to 101 (GGASISGNTASSSAGSGNSGNGSSSGSSTGS). Residues 102-115 (GSSGSGSTNGGSVN) show a composition bias toward gly residues. Over residues 126–143 (LDKEAVTKDQNGDGDKTR) the composition is skewed to basic and acidic residues. Low complexity predominate over residues 147–205 (SSAPSGKLSAAASGKALSKSSRTFSASTSVTSSGRSSGSSPDGNSGASSDGASSGISCG). Over residues 206–215 (KSTAKSTEAS) the composition is skewed to polar residues. The span at 222 to 247 (TTGAGTCSSAKSSKASSGTTSEATTS) shows a compositional bias: low complexity. Low complexity-rich tracts occupy residues 384-402 (AAANGAASGKGSASNGPPA) and 509-525 (AGASSSSSNQESGSSSN). A compositionally biased stretch (acidic residues) spans 553–586 (PEDQNNAEDDEMDDDDDDEEAEEDDENEDDNDEA). Over residues 587–610 (VSEKSAETEKSAGADERDPDEKQL) the composition is skewed to basic and acidic residues. Positions 759–884 (PSACSICSAV…PGMRGEAAAR (126 aa)) form a DNA-binding region, nuclear receptor. 4 disordered regions span residues 915-937 (TSVKWKSSGDSTSALTSIKPNPL), 981-1049 (LTKK…SHGV), 1115-1184 (VPSA…SSAK), and 1208-1231 (DIATSSSVTQSSNQTQGRKTKEHR). The span at 918–937 (KWKSSGDSTSALTSIKPNPL) shows a compositional bias: polar residues. Basic and acidic residues predominate over residues 986–1000 (SKQEKEKVKESEQSE). Residues 1031-1041 (PQTSTTTQPSA) show a composition bias toward low complexity. The segment covering 1123 to 1132 (SPEKPTHIVT) has biased composition (basic and acidic residues). 2 stretches are compositionally biased toward low complexity: residues 1173 to 1183 (GTASAAGGSSA) and 1211 to 1223 (TSSSVTQSSNQTQ). PHD-type zinc fingers lie at residues 1266-1347 (RALC…CTVC), 1348-1393 (YTCN…CLKC), and 1421-1482 (GNFC…CARR). A Bromo domain is found at 1496 to 1663 (AVMEEFKASL…SEQFPWFQNE (168 aa)). The segment at 1573 to 1592 (FKDQQQQQQQRNANMNKPRV) is disordered. A C2HC pre-PHD-type zinc finger spans residues 1734 to 1774 (TRMCLFCRKSGEGLSGEEARLLYCGHDCWVHTNCAMWSAEV). The PHD-type 4 zinc finger occupies 1795–1842 (IKCTVCGNRGATVGCNVRSCGEHYHYPCARSIDCAFLTDKSMYCPAHA). The FYR N-terminal domain occupies 1884 to 1941 (RVQFHIGSLEVRQLGAIVPRFSDSYEAVVPINFLCSRLYWSSKEPWKIVEYTVRTTIQ). Disordered regions lie at residues 1991–2019 (GGTDWSGEFPNPNSCVPPDENTEEEPQQQ), 2068–2110 (TQAM…WPAS), 2283–2302 (CSPTMSSNETESDVSGQGMT), 2649–2669 (GGGADGNQPGSNQQPLILGGT), 2866–2894 (SNLKQSQVKGKAASGTGTTCGAPPSIASK), 3029–3096 (QHFS…PTPP), and 3347–3381 (RKEEQRTVSQEQEQSKAAIVPTAAAPEPPQPIQEP). Low complexity predominate over residues 2074–2087 (NQAQNQNQQAGGAN). The segment covering 3032–3043 (STSSSSSSSNCS) has biased composition (low complexity). Over residues 3044-3057 (LPTNVVNPMQQQAP) the composition is skewed to polar residues. The 85-residue stretch at 3386-3470 (GPHLLYEIQS…EKCSKYTPKY (85 aa)) folds into the FYR C-terminal domain. In terms of domain architecture, SET spans 3588 to 3704 (DYVGVFRSHI…QGEELTYDYK (117 aa)). 2 residues coordinate S-adenosyl-L-methionine: His-3598 and Arg-3600. Cys-3641 bears the S-methylcysteine; by autocatalysis mark. Residues Tyr-3642 and 3665 to 3666 (NH) each bind S-adenosyl-L-methionine. Zn(2+)-binding residues include Cys-3668, Cys-3714, Cys-3716, and Cys-3721. In terms of domain architecture, Post-SET spans 3710 to 3726 (EKIPCSCGSKRCRKYLN).

The protein belongs to the class V-like SAM-binding methyltransferase superfamily. Histone-lysine methyltransferase family. TRX/MLL subfamily. As to quaternary structure, interacts (via SET domain) with ash1 (via SET domain). Interacts with Nup98. As to expression, maternal isoforms are expressed in syncytial blastoderm, confined to the ventral region fated to become mesoderm. An additional broad domain of expression arises during cellularization and is quickly resolved into four pair-rule-like stripes in the posterior half of the embryo.

The protein localises to the nucleus. Its subcellular location is the chromosome. It catalyses the reaction L-lysyl(9)-[histone H3] + 3 S-adenosyl-L-methionine = N(6),N(6),N(6)-trimethyl-L-lysyl(9)-[histone H3] + 3 S-adenosyl-L-homocysteine + 3 H(+). The catalysed reaction is L-cysteinyl-[protein] + S-adenosyl-L-methionine = S-methyl-L-cysteinyl-[protein] + S-adenosyl-L-homocysteine + H(+). Functionally, histone methyltransferase that methylates 'Lys-4' of histone H3 (H3K4me). H3K4me represents a specific tag for epigenetic transcriptional activation. Functions in segment determination through interaction with genes of bithorax (BX-C) and antennapedia (ANT-C) complexes. Acts as an activator of BX-C. Involved in the very early regulation of homeotic genes expressed only in the posterior region of the embryo. Also has auto-methylation activity on Cys-3641. In Drosophila melanogaster (Fruit fly), this protein is Histone-lysine N-methyltransferase trithorax.